We begin with the raw amino-acid sequence, 415 residues long: Mannosylglycerate hydrolase (415 aa).

Residues Tyr-23, 27–30 (WLWD), Tyr-76, Gln-98, and Gly-158 contribute to the substrate site. Residue Asp-160 is the Proton donor of the active site. Substrate contacts are provided by residues Arg-193 and 344 to 345 (YW). Glu-388 acts as the Proton acceptor in catalysis.

This sequence belongs to the glycosyl hydrolase 63 family. Homotetramer in solution.

The catalysed reaction is (2R)-2-O-(alpha-D-mannosyl)-glycerate + H2O = D-mannose + (R)-glycerate. It catalyses the reaction (2R)-2-O-(alpha-D-glucopyranosyl)-glycerate + H2O = (R)-glycerate + D-glucose. With respect to regulation, activity is not stimulated by divalent cations and not affected in the presence of EDTA. Hydrolase that catalyzes the hydrolysis of mannosylglycerate (MG), a solute produced in response to osmotic stress in thermophiles, into mannose and glycerate. Can also hydrolyze glucosylglycerate (GG) to glucose and glycerate, with similar catalytic efficiency. Is highly specific for MG and GG, and cannot use mannosylglyceramide (MGA), glucosylglycerol, mannosylglucosylglycerate (MGG), glucosylglucosylglycerate (GGG) or trehalose as substrates. The protein is Mannosylglycerate hydrolase of Thermus thermophilus (strain ATCC BAA-163 / DSM 7039 / HB27).